The chain runs to 468 residues: DNA methyltransferase 1-associated protein 1 (468 aa).

2 stretches are compositionally biased toward basic and acidic residues: residues 1 to 11 (MATGADVRDIL) and 26 to 48 (SKKDIINPDKKKSKKSSETLTFK). Residues 1–48 (MATGADVRDILELGGPEGDAASGTISKKDIINPDKKKSKKSSETLTFK) form a disordered region. Lysine 27 participates in a covalent cross-link: Glycyl lysine isopeptide (Lys-Gly) (interchain with G-Cter in SUMO2). In terms of domain architecture, SANT spans 149-199 (DDAWTKAETDHLFDLSRRFDLRFVVIHDRYDHQQFKKRSVEDLKERYYHIC). A Glycyl lysine isopeptide (Lys-Gly) (interchain with G-Cter in SUMO2) cross-link involves residue lysine 214. Residues 225–275 (RRKEQLERLYNRTPEQVAEEEYLLQELRKIEARKKEREKRSQDLQKLITAA) adopt a coiled-coil conformation. Residues 258-267 (KKEREKRSQD) are compositionally biased toward basic and acidic residues. 2 disordered regions span residues 258-305 (KKER…PAVP) and 411-468 (AVGP…AKKP). Threonine 446 carries the post-translational modification Phosphothreonine. Serine 449 is modified (phosphoserine).

Component of the NuA4 histone acetyltransferase complex which contains the catalytic subunit KAT5/TIP60 and the subunits EP400, TRRAP/PAF400, BRD8/SMAP, EPC1, DMAP1/DNMAP1, RUVBL1/TIP49, RUVBL2, ING3, actin, ACTL6A/BAF53A, MORF4L1/MRG15, MORF4L2/MRGX, MRGBP, YEATS4/GAS41, VPS72/YL1 and MEAF6. Component of a NuA4-related complex which contains EP400, TRRAP/PAF400, SRCAP, BRD8/SMAP, EPC1, DMAP1/DNMAP1, RUVBL1/TIP49, RUVBL2, actin, ACTL6A/BAF53A, VPS72 and YEATS4/GAS41. DMAP1 also forms a complex with DNMT1 and HDAC2. Throughout S phase it interacts directly with the N-terminus of DNMT1, which serves to recruit DMAP1 to replication foci. DMAP1 interacts with ING1, a component of the mSIN3A transcription repressor complex, although this interaction is not required for recruitment of ING1 to heterochromatin. Interacts directly with the transcriptional corepressor TSG101. Interacts with URI1. Interacts with the pro-apoptotic protein DAXX.

The protein resides in the nucleus. It is found in the cytoplasm. Involved in transcription repression and activation. Its interaction with HDAC2 may provide a mechanism for histone deacetylation in heterochromatin following replication of DNA at late firing origins. Can also repress transcription independently of histone deacetylase activity. May specifically potentiate DAXX-mediated repression of glucocorticoid receptor-dependent transcription. Component of the NuA4 histone acetyltransferase (HAT) complex which is involved in transcriptional activation of select genes principally by acetylation of nucleosomal histones H4 and H2A. This modification may both alter nucleosome - DNA interactions and promote interaction of the modified histones with other proteins which positively regulate transcription. This complex may be required for the activation of transcriptional programs associated with oncogene and proto-oncogene mediated growth induction, tumor suppressor mediated growth arrest and replicative senescence, apoptosis, and DNA repair. NuA4 may also play a direct role in DNA repair when recruited to sites of DNA damage. Participates in the nuclear localization of URI1 and increases its transcriptional corepressor activity. The chain is DNA methyltransferase 1-associated protein 1 (Dmap1) from Mus musculus (Mouse).